A 369-amino-acid chain; its full sequence is Glycine oxidase (369 aa).

FAD-binding positions include 14-15 (II), 34-35 (ES), 42-43 (AT), 47-49 (AGM), and Val-174. Arg-302 and Arg-329 together coordinate substrate. Residue 327-333 (HFRNGIL) participates in FAD binding.

Belongs to the DAO family. ThiO subfamily. In terms of assembly, homotetramer. FAD serves as cofactor.

It carries out the reaction glycine + O2 + H2O = glyoxylate + H2O2 + NH4(+). The catalysed reaction is glyphosate + O2 + H2O = aminomethylphosphonate + glyoxylate + H2O2 + H(+). The enzyme catalyses N-ethylglycine + O2 + H2O = ethylamine + glyoxylate + H2O2. It catalyses the reaction sarcosine + O2 + H2O = methylamine + glyoxylate + H2O2. It carries out the reaction D-alanine + O2 + H2O = pyruvate + H2O2 + NH4(+). It functions in the pathway cofactor biosynthesis; thiamine diphosphate biosynthesis. Its function is as follows. Catalyzes the FAD-dependent oxidative deamination of glycine, leading to glyoxylate, ammonia and hydrogen peroxide. Is also able to act on various amines and D-amino acids to yield the corresponding alpha-keto acids, ammonia/amine, and hydrogen peroxide. Can also oxidize the herbicide glyphosate (N-phosphonomethylglycine), and thus may be involved in the degradation pathway that allows B.licheniformis J33-8 to grow with glyphosate as the sole source of carbon. Is essential for thiamine biosynthesis since the oxidation of glycine catalyzed by ThiO generates the glycine imine intermediate (dehydroglycine) required for the biosynthesis of the thiazole ring of thiamine pyrophosphate. This Bacillus licheniformis protein is Glycine oxidase.